A 368-amino-acid polypeptide reads, in one-letter code: Galactoside 2-alpha-L-fucosyltransferase SEC1 (368 aa).

The interval 1–20 is disordered; the sequence is MWDMRAVAPQRPAAGHPRAG. Residues 1 to 31 lie on the Cytoplasmic side of the membrane; sequence MWDMRAVAPQRPAAGHPRAGWPRKLKTAATR. Residues 32-52 traverse the membrane as a helical segment; sequence FWATCPSSSTVCFLFVIFAVS. Residues 53-368 are Lumenal-facing; that stretch reads TVFHCHRRLA…NLGQARESHP (316 aa).

Belongs to the glycosyltransferase 11 family. Kidney.

Its subcellular location is the golgi apparatus. The protein resides in the golgi stack membrane. The enzyme catalyses a ganglioside GM1 + GDP-beta-L-fucose = a ganglioside Fuc-GM1 + GDP + H(+). It participates in protein modification; protein glycosylation. In terms of biological role, catalyzes the transfer of alpha 1,2-linked fucose to ganglioside GM1 and galacto-N-biose. This Bos taurus (Bovine) protein is Galactoside 2-alpha-L-fucosyltransferase SEC1.